We begin with the raw amino-acid sequence, 239 residues long: Putative glutamine amidotransferase-like protein YfeJ (239 aa).

The 200-residue stretch at Met1–Asp200 folds into the Glutamine amidotransferase type-1 domain.

This is Putative glutamine amidotransferase-like protein YfeJ (yfeJ) from Salmonella typhimurium (strain LT2 / SGSC1412 / ATCC 700720).